We begin with the raw amino-acid sequence, 89 residues long: DNA/RNA-binding protein Alba 2 (89 aa).

At Lys-12 the chain carries N6-acetyllysine. 3 residues coordinate Zn(2+): Lys-14, Asp-18, and Asp-22.

Belongs to the histone-like Alba family. Forms homodimers and homotetramers. Homodimer at pH below 6.0. Forms homotetramers and higher order homooligomers at near the growth temperature of 80 degrees Celsius and pH 7.0. Interacts with Alba 1; heterodimers lack cooperative DNA-binding behavior and result in more compact chromatin structures compared to Alba 1 homodimers. In terms of processing, acetylated. Acetylation at Lys-12 decreases DNA-binding affinity.

It localises to the cytoplasm. Its subcellular location is the chromosome. Functionally, binds single-stranded DNA, RNA and double-stranded DNA. Involved in DNA compaction. This Saccharolobus solfataricus (strain ATCC 35092 / DSM 1617 / JCM 11322 / P2) (Sulfolobus solfataricus) protein is DNA/RNA-binding protein Alba 2.